Reading from the N-terminus, the 203-residue chain is Proteasome subunit beta 2 (203 aa).

A propeptide spans 1–9 (MGEEVQIGA) (removed in mature form; by autocatalysis). Threonine 10 acts as the Nucleophile in catalysis.

It belongs to the peptidase T1B family. The 20S proteasome core is composed of 14 alpha and 14 beta subunits that assemble into four stacked heptameric rings, resulting in a barrel-shaped structure. The two inner rings, each composed of seven catalytic beta subunits, are sandwiched by two outer rings, each composed of seven alpha subunits. The catalytic chamber with the active sites is on the inside of the barrel. Has a gated structure, the ends of the cylinder being occluded by the N-termini of the alpha-subunits. Is capped at one or both ends by the proteasome regulatory ATPase, PAN.

It localises to the cytoplasm. The enzyme catalyses Cleavage of peptide bonds with very broad specificity.. The formation of the proteasomal ATPase PAN-20S proteasome complex, via the docking of the C-termini of PAN into the intersubunit pockets in the alpha-rings, triggers opening of the gate for substrate entry. Interconversion between the open-gate and close-gate conformations leads to a dynamic regulation of the 20S proteasome proteolysis activity. Its function is as follows. Component of the proteasome core, a large protease complex with broad specificity involved in protein degradation. This Pyrobaculum aerophilum (strain ATCC 51768 / DSM 7523 / JCM 9630 / CIP 104966 / NBRC 100827 / IM2) protein is Proteasome subunit beta 2.